Reading from the N-terminus, the 406-residue chain is Putative odorant receptor 65b (406 aa).

Residues 1 to 55 (MDIQRFLKFYKVGWKTYRDPLMEASHSSIYYWREQMKAMALFTTTEERLLPYRSK) lie on the Cytoplasmic side of the membrane. A helical transmembrane segment spans residues 56 to 76 (WHTLVYIQMVIFFASMSFGLT). The Extracellular segment spans residues 77-88 (ESMGDHVQMGRD). Residues 89–109 (LAFILGAFFIIFKTYYFCWYG) traverse the membrane as a helical segment. At 110-144 (DELDQVISDLDALHPWAQKGPNPVEYQTGKRWYFV) the chain is on the cytoplasmic side. Residues 145 to 165 (MAFFLATSWSFFLCILLLLLI) traverse the membrane as a helical segment. Topologically, residues 166 to 218 (TSPMWVHQQNLPFHAAFPFQWHEKSLHPISHAIIYLFQSYFAVYCLTWLLCIE) are extracellular. The chain crosses the membrane as a helical span at residues 219-239 (GLSICIYAEITFGIEVLCLEL). Topologically, residues 240–275 (RQIHRHNYGLQELRMETNRLVKLHQKIVEILDRTND) are cytoplasmic. The helical transmembrane segment at 276-296 (VFHGTLIMQMGVNFSLVSLSV) threads the bilayer. Topologically, residues 297–307 (LEAVEARKDPK) are extracellular. Residues 308-328 (VVAQFAVLMLLALGHLSMWSY) traverse the membrane as a helical segment. The Cytoplasmic portion of the chain corresponds to 329-381 (CGDQLSQKSLQISEAAYEAYDPTKGSKDVYRDLCVIIRRGQDPLIMRASPFPS). A helical membrane pass occupies residues 382-402 (FNLINYSAILNQCYGILTFLL). Residues 403-406 (KTLD) lie on the Extracellular side of the membrane.

The protein belongs to the insect chemoreceptor superfamily. Heteromeric odorant receptor channel (TC 1.A.69) family. Or49a subfamily. In terms of assembly, interacts with Orco. Complexes exist early in the endomembrane system in olfactory sensory neurons (OSNs), coupling these complexes to the conserved ciliary trafficking pathway.

It localises to the cell membrane. Its function is as follows. Odorant receptor which mediates acceptance or avoidance behavior, depending on its substrates. The odorant receptor repertoire encodes a large collection of odor stimuli that vary widely in identity, intensity, and duration. May form a complex with Orco to form odorant-sensing units, providing sensitive and prolonged odorant signaling and calcium permeability. In Drosophila melanogaster (Fruit fly), this protein is Putative odorant receptor 65b (Or65b).